Reading from the N-terminus, the 92-residue chain is Small ribosomal subunit protein uS19c (92 aa).

Belongs to the universal ribosomal protein uS19 family.

Its subcellular location is the plastid. It localises to the chloroplast. Its function is as follows. Protein S19 forms a complex with S13 that binds strongly to the 16S ribosomal RNA. The polypeptide is Small ribosomal subunit protein uS19c (Staurastrum punctulatum (Green alga)).